The chain runs to 72 residues: Translation initiation factor IF-1 (72 aa).

Residues 1 to 72 (MSKDDVIQMQ…SRARIVFRAK (72 aa)) form the S1-like domain.

Belongs to the IF-1 family. In terms of assembly, component of the 30S ribosomal translation pre-initiation complex which assembles on the 30S ribosome in the order IF-2 and IF-3, IF-1 and N-formylmethionyl-tRNA(fMet); mRNA recruitment can occur at any time during PIC assembly.

Its subcellular location is the cytoplasm. In terms of biological role, one of the essential components for the initiation of protein synthesis. Stabilizes the binding of IF-2 and IF-3 on the 30S subunit to which N-formylmethionyl-tRNA(fMet) subsequently binds. Helps modulate mRNA selection, yielding the 30S pre-initiation complex (PIC). Upon addition of the 50S ribosomal subunit IF-1, IF-2 and IF-3 are released leaving the mature 70S translation initiation complex. The protein is Translation initiation factor IF-1 of Methylibium petroleiphilum (strain ATCC BAA-1232 / LMG 22953 / PM1).